Here is a 3165-residue protein sequence, read N- to C-terminus: Protein eyes shut homolog (3165 aa).

Residues 1–21 form the signal peptide; that stretch reads MTDKSIIILSLMVFHSSFING. 4 N-linked (GlcNAc...) asparagine glycosylation sites follow: Asn42, Asn105, Asn117, and Asn166. 3 consecutive EGF-like domains span residues 170-212, 213-254, and 256-292; these read KQQF…KYCQ, ELDA…KNCS, and IIVQ…PFCE. 9 cysteine pairs are disulfide-bonded: Cys174-Cys189, Cys183-Cys200, Cys202-Cys211, Cys217-Cys228, Cys222-Cys242, Cys244-Cys253, Cys260-Cys270, Cys265-Cys280, and Cys282-Cys291. N-linked (GlcNAc...) asparagine glycans are attached at residues Asn252, Asn269, and Asn272. Residues Asn311 and Asn343 are each glycosylated (N-linked (GlcNAc...) asparagine). 2 EGF-like domains span residues 332–368 and 370–406; these read DVSE…LLCK and FQTS…KNCE. 2 disulfide bridges follow: Cys341–Cys356 and Cys358–Cys367. Asn382 carries an N-linked (GlcNAc...) asparagine glycan. Cys396 and Cys405 are joined by a disulfide. Asn506, Asn520, Asn521, Asn566, and Asn573 each carry an N-linked (GlcNAc...) asparagine glycan. EGF-like domains are found at residues 566-602, 604-641, and 643-679; these read NITD…RLCV, NVDY…NICE, and DIED…TRCE. Disulfide bonds link Cys592–Cys601 and Cys608–Cys620. N-linked (GlcNAc...) asparagine glycans are attached at residues Asn611 and Asn628. A disulfide bond links Cys629 and Cys640. The N-linked (GlcNAc...) asparagine glycan is linked to Asn654. Cystine bridges form between Cys669-Cys678, Cys685-Cys696, Cys690-Cys705, and Cys707-Cys719. The EGF-like 9; calcium-binding domain maps to 681-720; the sequence is DLDECALHPCKSGATCIDQPGNYFCQCGPPFKVVDGFSCL. One can recognise an EGF-like 10 domain in the interval 733-769; the sequence is NIDNCILNAFEHNSTYKDLHLSYQCVCLSGWEGNFCE. Asn745 is a glycosylation site (N-linked (GlcNAc...) asparagine). Intrachain disulfides connect Cys759-Cys768, Cys775-Cys786, Cys780-Cys795, Cys797-Cys806, Cys813-Cys824, Cys818-Cys835, Cys837-Cys846, Cys853-Cys866, Cys860-Cys876, Cys878-Cys887, Cys894-Cys905, Cys899-Cys914, Cys916-Cys925, Cys932-Cys943, Cys937-Cys952, Cys954-Cys963, Cys970-Cys981, Cys975-Cys990, Cys992-Cys1001, Cys1008-Cys1019, Cys1013-Cys1028, Cys1030-Cys1039, Cys1046-Cys1056, Cys1051-Cys1065, Cys1067-Cys1076, Cys1083-Cys1094, Cys1088-Cys1103, Cys1105-Cys1114, Cys1121-Cys1137, Cys1131-Cys1147, Cys1149-Cys1158, Cys1165-Cys1176, Cys1170-Cys1185, and Cys1187-Cys1196. The EGF-like 11; calcium-binding domain occupies 771 to 807; the sequence is ESNECKMNPCKNNSTCTDLYKSYRCECTSGWTGQNCS. 3 N-linked (GlcNAc...) asparagine glycosylation sites follow: Asn782, Asn783, and Asn805. EGF-like domains are found at residues 809–847, 849–888, and 890–926; these read EINE…QFCH, RYNP…KHCE, and DVKE…SLCE. N-linked (GlcNAc...) asparagine glycans are attached at residues Asn862 and Asn863. The EGF-like 15; calcium-binding domain maps to 928 to 964; sequence EINECSSEPCKNNGTCVDLTNRFFCNCEPGYHGPFCE. An N-linked (GlcNAc...) asparagine glycan is attached at Asn940. The EGF-like 16 domain maps to 966–1002; sequence EVNKCKISPCLDEENCVYRTDRYNCLCAPGYTGINCE. One can recognise an EGF-like 17; calcium-binding domain in the interval 1004–1040; it reads NLDECLSEPCLHDGVCIDGINHYTCDCKSGFFGTHCE. EGF-like domains follow at residues 1042–1077, 1079–1115, and 1117–1159; these read NAND…IQCK, KIND…AYCE, and SIDN…QFCE. The EGF-like 21; calcium-binding domain maps to 1161-1197; sequence NINECSSSPCLHGANCEDHINGYVCKCQPGWSGHHCE. Asn1509, Asn1906, Asn1941, and Asn2033 each carry an N-linked (GlcNAc...) asparagine glycan. One can recognise a Laminin G-like 1 domain in the interval 1883–2063; the sequence is FSCVCYYGDS…AVRNYHINNC (181 aa). 4 cysteine pairs are disulfide-bonded: Cys2037–Cys2063, Cys2103–Cys2114, Cys2108–Cys2128, and Cys2130–Cys2139. In terms of domain architecture, EGF-like 22 spans 2099-2140; it reads APSVCQEDVCHNGGTCRPIFLSSGIVSFQCDCPLHFTGRFCE. The Laminin G-like 2 domain occupies 2145 to 2339; the sequence is LFFPSFSGNS…NIENCHVPWC (195 aa). 3 N-linked (GlcNAc...) asparagine glycosylation sites follow: Asn2170, Asn2185, and Asn2228. 6 cysteine pairs are disulfide-bonded: Cys2308-Cys2339, Cys2339-Cys2350, Cys2344-Cys2359, Cys2375-Cys2386, Cys2380-Cys2396, and Cys2398-Cys2407. 2 consecutive EGF-like domains span residues 2335 to 2368 and 2371 to 2408; these read HVPW…YSGK and QFAS…PLCT. An N-linked (GlcNAc...) asparagine glycan is attached at Asn2347. Asn2412, Asn2453, Asn2484, Asn2506, and Asn2532 each carry an N-linked (GlcNAc...) asparagine glycan. The Laminin G-like 3 domain maps to 2419 to 2609; that stretch reads SGTDAFGYTS…PNAGRSVGQC (191 aa). 3 disulfide bridges follow: Cys2576–Cys2609, Cys2614–Cys2625, and Cys2619–Cys2634. EGF-like domains follow at residues 2610-2646 and 2648-2689; these read HASP…AFCT and TVSI…IYCE. Asn2635 is a glycosylation site (N-linked (GlcNAc...) asparagine). 4 disulfide bridges follow: Cys2636-Cys2645, Cys2652-Cys2668, Cys2662-Cys2677, and Cys2679-Cys2688. Residues 2717–2895 enclose the Laminin G-like 4 domain; that stretch reads DPSFRSSELS…AKGGSNVGDC (179 aa). 3 N-linked (GlcNAc...) asparagine glycosylation sites follow: Asn2775, Asn2800, and Asn2824. 4 disulfides stabilise this stretch: Cys2868/Cys2895, Cys2900/Cys2911, Cys2905/Cys2920, and Cys2922/Cys2931. EGF-like domains follow at residues 2896-2932 and 2933-2970; these read DGTA…NICN and QSAY…RYCE. N-linked (GlcNAc...) asparagine glycosylation occurs at Asn2914. N-linked (GlcNAc...) asparagine glycosylation occurs at Asn2932. 3 cysteine pairs are disulfide-bonded: Cys2937-Cys2948, Cys2942-Cys2958, and Cys2960-Cys2969. N-linked (GlcNAc...) asparagine glycans are attached at residues Asn2971, Asn3006, Asn3036, Asn3057, Asn3073, and Asn3082. The Laminin G-like 5 domain occupies 2975–3165; sequence FTTAKFMGNS…YDGDEQNEVT (191 aa).

It belongs to the EYS family. Expressed in retina (at protein level).

It localises to the cell projection. It is found in the cilium. The protein resides in the photoreceptor outer segment. The protein localises to the cytoplasm. Its subcellular location is the cytoskeleton. It localises to the cilium axoneme. It is found in the microtubule organizing center. The protein resides in the centrosome. The protein localises to the secreted. Its subcellular location is the extracellular space. It localises to the extracellular matrix. It is found in the interphotoreceptor matrix. Its function is as follows. Required to maintain the integrity of photoreceptor cells. Specifically required for normal morphology of the photoreceptor ciliary pocket, and might thus facilitate protein trafficking between the photoreceptor inner and outer segments via the transition zone. In Macaca fascicularis (Crab-eating macaque), this protein is Protein eyes shut homolog.